The primary structure comprises 25 residues: Dermaseptin-5.2TR (25 aa).

The residue at position 25 (Val-25) is a Valine amide.

In terms of tissue distribution, expressed by the skin glands.

The protein resides in the secreted. Functionally, has antimicrobial activity. The sequence is that of Dermaseptin-5.2TR from Phyllomedusa trinitatis (Trinidad leaf frog).